Consider the following 278-residue polypeptide: 2-dehydro-3-deoxyphosphooctonate aldolase (278 aa).

It belongs to the KdsA family.

The protein localises to the cytoplasm. The catalysed reaction is D-arabinose 5-phosphate + phosphoenolpyruvate + H2O = 3-deoxy-alpha-D-manno-2-octulosonate-8-phosphate + phosphate. It participates in carbohydrate biosynthesis; 3-deoxy-D-manno-octulosonate biosynthesis; 3-deoxy-D-manno-octulosonate from D-ribulose 5-phosphate: step 2/3. The protein operates within bacterial outer membrane biogenesis; lipopolysaccharide biosynthesis. This Bartonella tribocorum (strain CIP 105476 / IBS 506) protein is 2-dehydro-3-deoxyphosphooctonate aldolase.